Consider the following 310-residue polypeptide: MSGERAKRFPLALEDLKRAPRKSEGRPGERQTAGAVPKAADKPAAVLKPVAVKPAAVRAPLPGIAAAKPATAPKPTALKPALPKPAAPSIAPAGAFALTSERVRERMVERLRANGVTDARVLDAMAAVPRHLFVDPGLATQAYEDSALPIGHQQTISKPSVVARMIELAMAGRTLERVLEIGTGCGYQAAVLSHVARDVYSIERIKPLYERAKLNLRPLRVPNIRLHYGDGRVGLPSAAPFDAIVIAAAGLDVPQALLEQLAIGGRLVAPVGAQSGQHQVLTLVERVAHAQWRESRLDRVFFVPLKSGVI.

The interval 1–41 (MSGERAKRFPLALEDLKRAPRKSEGRPGERQTAGAVPKAAD) is disordered. Positions 14–29 (EDLKRAPRKSEGRPGE) are enriched in basic and acidic residues. Serine 157 is a catalytic residue.

This sequence belongs to the methyltransferase superfamily. L-isoaspartyl/D-aspartyl protein methyltransferase family.

Its subcellular location is the cytoplasm. It catalyses the reaction [protein]-L-isoaspartate + S-adenosyl-L-methionine = [protein]-L-isoaspartate alpha-methyl ester + S-adenosyl-L-homocysteine. Functionally, catalyzes the methyl esterification of L-isoaspartyl residues in peptides and proteins that result from spontaneous decomposition of normal L-aspartyl and L-asparaginyl residues. It plays a role in the repair and/or degradation of damaged proteins. This chain is Protein-L-isoaspartate O-methyltransferase, found in Burkholderia cenocepacia (strain HI2424).